The primary structure comprises 192 residues: Histone H3-like centromeric protein CSE4 (192 aa).

The segment at 88 to 190 is H3-like; that stretch reads AKSHGSKYKP…MQLARRIRGQ (103 aa).

The protein belongs to the histone H3 family. As to quaternary structure, component of centromeric nucleosomes, where DNA is wrapped around a histone octamer core. The octamer contains two molecules each of H2A, H2B, CSE4/CENPA and H4 assembled in one CSE4-H4 heterotetramer and two H2A-H2B heterodimers. Interacts with the inner kinetochore. Post-translationally, ubiquitinated. Is degraded through ubiquitin-mediated proteolysis when not protected by its association to the kinetochore.

It is found in the nucleus. The protein localises to the chromosome. It localises to the centromere. Histone H3-like nucleosomal protein that is specifically found in centromeric nucleosomes. Replaces conventional H3 in the nucleosome core of centromeric chromatin that serves as an assembly site for the inner kinetochore. Required for recruitment and assembly of kinetochore proteins, mitotic progression and chromosome segregation. May serve as an epigenetic mark that propagates centromere identity through replication and cell division. The sequence is that of Histone H3-like centromeric protein CSE4 (CSE4) from Kluyveromyces marxianus (Yeast).